Reading from the N-terminus, the 330-residue chain is Putative [LysW]-L-2-aminoadipate/[LysW]-L-glutamate phosphate reductase (330 aa).

Residues 10-13 (SGYI) and 34-36 (SRK) contribute to the NADP(+) site. The active site involves Cys142. Asn297 contacts NADP(+).

This sequence belongs to the NAGSA dehydrogenase family. Type 1 subfamily. LysY sub-subfamily.

It is found in the cytoplasm. The enzyme catalyses [amino-group carrier protein]-C-terminal-N-(1-carboxy-5-oxopentan-1-yl)-L-glutamine + phosphate + NADP(+) = [amino-group carrier protein]-C-terminal-N-(1-carboxy-5-phosphooxy-5-oxopentan-1-yl)-L-glutamine + NADPH + H(+). The catalysed reaction is [amino-group carrier protein]-C-terminal-gamma-(L-glutamyl-5-semialdehyde)-L-glutamate + phosphate + NADP(+) = [amino-group carrier protein]-C-terminal-gamma-(5-phospho-L-glutamyl)-L-glutamate + NADPH + H(+). The protein operates within amino-acid biosynthesis; L-lysine biosynthesis via AAA pathway; L-lysine from L-alpha-aminoadipate (Thermus route): step 3/5. It functions in the pathway amino-acid biosynthesis; L-arginine biosynthesis. Involved in both the arginine and lysine biosynthetic pathways. This Pyrococcus abyssi (strain GE5 / Orsay) protein is Putative [LysW]-L-2-aminoadipate/[LysW]-L-glutamate phosphate reductase.